Consider the following 960-residue polypeptide: UvrABC system protein A (960 aa).

An ATP-binding site is contributed by 35–42; that stretch reads GLSGSGKS. The C4-type zinc-finger motif lies at 270 to 297; sequence CAHCNVSVPELQPRLFSFNAPFGACPSC. ABC transporter domains lie at 327–605 and 625–953; these read FKPE…QASL and GNGN…WYIK. ATP is bound at residue 657–664; it reads GVSGSGKS. The C4-type zinc finger occupies 756–782; the sequence is CEHCKGDGVITIEMNFLPDVYITCDVC.

Belongs to the ABC transporter superfamily. UvrA family. As to quaternary structure, forms a heterotetramer with UvrB during the search for lesions.

The protein resides in the cytoplasm. The UvrABC repair system catalyzes the recognition and processing of DNA lesions. UvrA is an ATPase and a DNA-binding protein. A damage recognition complex composed of 2 UvrA and 2 UvrB subunits scans DNA for abnormalities. When the presence of a lesion has been verified by UvrB, the UvrA molecules dissociate. The polypeptide is UvrABC system protein A (Treponema pallidum (strain Nichols)).